Here is an 89-residue protein sequence, read N- to C-terminus: Strongylocin 2 (89 aa).

An N-terminal signal peptide occupies residues 1–22 (MNIRTASFTFIVVMMILSQTMA). Positions 23–38 (DRFFNEPEEDDHLVES) are excised as a propeptide. Position 39 is a 6'-bromotryptophan (Trp39).

Contains 3 disulfide bonds.

In terms of biological role, has antimicrobial activity against Gram-negative bacteria and Gram-positive bacteria with minimum inhibitory concentration (MIC) between 0.78 uM and 3.13 uM. The chain is Strongylocin 2 from Echinus esculentus (Sea urchin).